The chain runs to 438 residues: Na(+)/H(+) antiporter NhaA (438 aa).

Transmembrane regions (helical) follow at residues 23–43, 62–82, 104–124, 133–153, 162–182, 185–205, 212–232, 302–322, 337–357, 372–392, and 410–430; these read FGGI…NSFL, FFIG…LFFL, SFPV…YFFL, GFGI…MLLG, VFLI…IALF, TNLK…LAIL, SLIP…QSGI, FLAP…NAGV, LGVI…ITFI, WWHI…SMFI, and IAIL…LFAL.

It belongs to the NhaA Na(+)/H(+) (TC 2.A.33) antiporter family.

The protein localises to the cell inner membrane. It catalyses the reaction Na(+)(in) + 2 H(+)(out) = Na(+)(out) + 2 H(+)(in). Functionally, na(+)/H(+) antiporter that extrudes sodium in exchange for external protons. This chain is Na(+)/H(+) antiporter NhaA, found in Helicobacter pylori (strain J99 / ATCC 700824) (Campylobacter pylori J99).